Consider the following 240-residue polypeptide: Homeobox protein goosecoid (240 aa).

The segment at residues 146-205 is a DNA-binding region (homeobox); that stretch reads KRRHRTIFTDEQLEALENLFQETKYPDVGTREQLARKVHLREEKVEVWFKNRRAKWRRQK. Positions 199–240 are disordered; sequence AKWRRQKRSSSEESENSQKWNKSTKTTSEKIEEGKSDVDSDS. The segment covering 225 to 240 has biased composition (basic and acidic residues); that stretch reads TSEKIEEGKSDVDSDS.

Belongs to the paired homeobox family. Bicoid subfamily.

It localises to the nucleus. This Danio rerio (Zebrafish) protein is Homeobox protein goosecoid (gsc).